The sequence spans 147 residues: Fluoride-specific ion channel FluC 1 (147 aa).

The next 4 helical transmembrane spans lie at 29–49 (YVYI…ISFL), 61–81 (IANL…IAFF), 90–110 (AITT…LELI), and 118–138 (FITL…LCYV). Na(+)-binding residues include G97 and T100.

Belongs to the fluoride channel Fluc/FEX (TC 1.A.43) family.

It is found in the cell membrane. The enzyme catalyses fluoride(in) = fluoride(out). Na(+) is not transported, but it plays an essential structural role and its presence is essential for fluoride channel function. Fluoride-specific ion channel. Important for reducing fluoride concentration in the cell, thus reducing its toxicity. The polypeptide is Fluoride-specific ion channel FluC 1 (Staphylococcus aureus (strain MRSA252)).